The primary structure comprises 249 residues: 3-deoxy-manno-octulosonate cytidylyltransferase (249 aa).

This sequence belongs to the KdsB family.

The protein localises to the cytoplasm. It catalyses the reaction 3-deoxy-alpha-D-manno-oct-2-ulosonate + CTP = CMP-3-deoxy-beta-D-manno-octulosonate + diphosphate. Its pathway is nucleotide-sugar biosynthesis; CMP-3-deoxy-D-manno-octulosonate biosynthesis; CMP-3-deoxy-D-manno-octulosonate from 3-deoxy-D-manno-octulosonate and CTP: step 1/1. The protein operates within bacterial outer membrane biogenesis; lipopolysaccharide biosynthesis. In terms of biological role, activates KDO (a required 8-carbon sugar) for incorporation into bacterial lipopolysaccharide in Gram-negative bacteria. The protein is 3-deoxy-manno-octulosonate cytidylyltransferase of Aliivibrio salmonicida (strain LFI1238) (Vibrio salmonicida (strain LFI1238)).